A 494-amino-acid chain; its full sequence is Guanosine-5'-triphosphate,3'-diphosphate pyrophosphatase (494 aa).

The protein belongs to the GppA/Ppx family. GppA subfamily.

It carries out the reaction guanosine 3'-diphosphate 5'-triphosphate + H2O = guanosine 3',5'-bis(diphosphate) + phosphate + H(+). Its pathway is purine metabolism; ppGpp biosynthesis; ppGpp from GTP: step 2/2. In terms of biological role, catalyzes the conversion of pppGpp to ppGpp. Guanosine pentaphosphate (pppGpp) is a cytoplasmic signaling molecule which together with ppGpp controls the 'stringent response', an adaptive process that allows bacteria to respond to amino acid starvation, resulting in the coordinated regulation of numerous cellular activities. This chain is Guanosine-5'-triphosphate,3'-diphosphate pyrophosphatase, found in Escherichia coli O127:H6 (strain E2348/69 / EPEC).